We begin with the raw amino-acid sequence, 220 residues long: Cytidylate kinase (220 aa).

Residue 9–17 (GPAASGKST) coordinates ATP.

The protein belongs to the cytidylate kinase family. Type 1 subfamily.

It is found in the cytoplasm. The enzyme catalyses CMP + ATP = CDP + ADP. The catalysed reaction is dCMP + ATP = dCDP + ADP. This is Cytidylate kinase from Thermotoga petrophila (strain ATCC BAA-488 / DSM 13995 / JCM 10881 / RKU-1).